The chain runs to 388 residues: L-lactate dehydrogenase (388 aa).

The 380-residue stretch at 1 to 380 folds into the FMN hydroxy acid dehydrogenase domain; the sequence is MIISAASDYR…SADALSRVTR (380 aa). Position 24 (tyrosine 24) interacts with substrate. The FMN site is built by serine 106 and glutamine 127. Tyrosine 129 is a binding site for substrate. Threonine 155 provides a ligand contact to FMN. Residue arginine 164 coordinates substrate. Lysine 251 is an FMN binding site. The Proton acceptor role is filled by histidine 275. Arginine 278 is a binding site for substrate. 306-330 lines the FMN pocket; the sequence is DSGIRSGLDVVRMLALGADAVLLGR.

The protein belongs to the FMN-dependent alpha-hydroxy acid dehydrogenase family. It depends on FMN as a cofactor.

The protein localises to the cell inner membrane. The enzyme catalyses (S)-lactate + A = pyruvate + AH2. Its function is as follows. Catalyzes the conversion of L-lactate to pyruvate. Is coupled to the respiratory chain. In Xanthomonas oryzae pv. oryzae (strain MAFF 311018), this protein is L-lactate dehydrogenase.